The sequence spans 461 residues: Cysteine--tRNA ligase (461 aa).

Cysteine 28 is a binding site for Zn(2+). The short motif at 30 to 40 (ITVYDLCHIGH) is the 'HIGH' region element. Residues cysteine 209, histidine 234, and glutamate 238 each contribute to the Zn(2+) site. The 'KMSKS' region motif lies at 266 to 270 (KMSKS). Lysine 269 provides a ligand contact to ATP.

The protein belongs to the class-I aminoacyl-tRNA synthetase family. In terms of assembly, monomer. Zn(2+) serves as cofactor.

It is found in the cytoplasm. The catalysed reaction is tRNA(Cys) + L-cysteine + ATP = L-cysteinyl-tRNA(Cys) + AMP + diphosphate. The chain is Cysteine--tRNA ligase from Shigella flexneri.